Consider the following 604-residue polypeptide: Ras guanine nucleotide exchange factor H (604 aa).

Residues 1-26 (MSNTNINVQSSTPKKSLGSSQYSLAG) are compositionally biased toward polar residues. Residues 1–61 (MSNTNINVQS…QENSIDDSGS (61 aa)) are disordered. Residues 27-49 (SSSSNLNNINNNNNNNNNNNNNS) are compositionally biased toward low complexity. Residues 50-61 (TGQENSIDDSGS) show a composition bias toward polar residues. The LisH domain maps to 115-147 (NDTMLLKLIMQYFHEENLTTSLKKIQEETKVQF). Residues 221-335 (PDGTIKAATF…AVINLKIENY (115 aa)) form the N-terminal Ras-GEF domain. Residues 365–591 (DEEEIARQLC…EQPQLTLDLS (227 aa)) enclose the Ras-GEF domain.

In terms of assembly, component of the Sca1 complex composed of at least gefA, gefH, scaA, phr, and the protein phosphatase 2A subunits pppA and pho2B. Interacts directly with gefA and phr.

It is found in the cell membrane. Its function is as follows. Promotes the exchange of Ras-bound GDP by GTP. Component of the Sca1 complex, a regulator of cell motility, chemotaxis and signal relay. The Sca1 complex is recruited to the plasma membrane in a chemoattractant- and F-actin-dependent manner and is enriched at the leading edge of chemotaxing cells where it regulates F-actin dynamics and signal relay by controlling the activation of rasC and the downstream target of rapamycin complex 2 (TORC2)-Akt/protein kinase B (PKB) pathway. This Dictyostelium discoideum (Social amoeba) protein is Ras guanine nucleotide exchange factor H (gefH).